The following is a 275-amino-acid chain: Large ribosomal subunit protein uL2 (275 aa).

A disordered region spans residues Ala224–Lys275. Over residues Lys264–Lys275 the composition is skewed to basic and acidic residues.

The protein belongs to the universal ribosomal protein uL2 family. As to quaternary structure, part of the 50S ribosomal subunit. Forms a bridge to the 30S subunit in the 70S ribosome.

In terms of biological role, one of the primary rRNA binding proteins. Required for association of the 30S and 50S subunits to form the 70S ribosome, for tRNA binding and peptide bond formation. It has been suggested to have peptidyltransferase activity; this is somewhat controversial. Makes several contacts with the 16S rRNA in the 70S ribosome. This is Large ribosomal subunit protein uL2 from Thermoanaerobacter pseudethanolicus (strain ATCC 33223 / 39E) (Clostridium thermohydrosulfuricum).